The primary structure comprises 269 residues: uncharacterized protein (269 aa).

This is an uncharacterized protein from Schizosaccharomyces pombe (strain 972 / ATCC 24843) (Fission yeast).